Here is a 215-residue protein sequence, read N- to C-terminus: Virulence protein YscR (215 aa).

Helical transmembrane passes span 10-30 (LIGI…GTSF), 53-73 (IALY…TLLA), 156-176 (IGLL…NILL), and 188-208 (ISLP…LTLA).

It belongs to the FliP/MopC/SpaP family.

It localises to the cell membrane. This Salmonella typhimurium (strain LT2 / SGSC1412 / ATCC 700720) protein is Virulence protein YscR (yscR).